The sequence spans 461 residues: Photosynthetic NDH subunit of subcomplex B 1, chloroplastic (461 aa).

The transit peptide at 1–44 directs the protein to the chloroplast; it reads MASSLPLLPKPISPFFKTPPFSTSKPLVFLNFQTRLTSRSSDVS. Residues 66 to 90 are disordered; it reads NEYGSLFADGKQDEDPRPPDNPDNP. Basic and acidic residues predominate over residues 75–85; it reads GKQDEDPRPPD.

As to quaternary structure, part of the chloroplast NDH complex, composed of a mixture of chloroplast and nucleus encoded subunits. Component of the NDH subcomplex B, at least composed of PnsB1, PnsB2, PnsB3, PnsB4 and PnsB5.

It is found in the plastid. The protein localises to the chloroplast thylakoid membrane. Functionally, NDH shuttles electrons from NAD(P)H:plastoquinone, via FMN and iron-sulfur (Fe-S) centers, to quinones in the photosynthetic chain and possibly in a chloroplast respiratory chain. The immediate electron acceptor for the enzyme in this species is believed to be plastoquinone. Couples the redox reaction to proton translocation, and thus conserves the redox energy in a proton gradient. This chain is Photosynthetic NDH subunit of subcomplex B 1, chloroplastic, found in Arabidopsis thaliana (Mouse-ear cress).